The primary structure comprises 442 residues: Trigger factor (442 aa).

One can recognise a PPIase FKBP-type domain in the interval 170–250; it reads GDIATVDYHE…LKALKQRQLP (81 aa).

It belongs to the FKBP-type PPIase family. Tig subfamily.

The protein resides in the cytoplasm. It catalyses the reaction [protein]-peptidylproline (omega=180) = [protein]-peptidylproline (omega=0). Involved in protein export. Acts as a chaperone by maintaining the newly synthesized protein in an open conformation. Functions as a peptidyl-prolyl cis-trans isomerase. The chain is Trigger factor (tig) from Treponema pallidum (strain Nichols).